The following is a 71-amino-acid chain: Venom peptide 2-long (71 aa).

The signal sequence occupies residues 1-24; it reads MKQSIIIALFATIAVMACLQMVAA. AXPX repeat units follow at residues 24–27, 32–35, 44–47, 50–53, and 54–57; these read AVPA, AAPG, ASPE, and AEPI. Positions 25-54 are excised as a propeptide; the sequence is VPAPVPEAAPGPVAEAEAYASPEALASPEA. Leucine 68 carries the post-translational modification Leucine amide.

It belongs to the MCD family. Protonectin subfamily. In terms of tissue distribution, expressed by the venom gland.

It is found in the secreted. The protein localises to the target cell membrane. Antimicrobial peptide with strong activity against the fungus B.cinerea (MIC=0.5 ug/ml), and poor activities against the fungus C.albicans (MIC=100 ug/ml), the Gram-positive bacterium S.aureus (MIC=125 ug/ml) and the Gram-negative bacterium E.coli (MIC=125 ug/ml). Its function is as follows. Antimicrobial peptide with strong activity against the fungus B.cinerea (MIC=0.4 uM), and poor activities against the fungus C.albicans (MIC=16 uM), the Gram-positive bacterium S.aureus (MIC=20 uM) and the Gram-negative bacterium E.coli (MIC=79 uM). Shows cytolytic activity against insect cell lines. Has potent hemolytic activity against ovine erythrocytes. Has potent hemolytic activity against human erythrocytes (EC(50)=31 uM). In vivo, peptide injection in the vicinity of the head and thorax of lepidopteran larvae induces feeding disorder followed by death due to starvation. This is Venom peptide 2-long from Orancistrocerus drewseni (Solitary wasp).